Consider the following 406-residue polypeptide: Acetamidase (406 aa).

Residues 387–399 (CRPRSSTSTSPRR) are compositionally biased toward low complexity. Residues 387–406 (CRPRSSTSTSPRRQGPAEGR) are disordered.

The protein belongs to the acetamidase/formamidase family.

It catalyses the reaction a monocarboxylic acid amide + H2O = a monocarboxylate + NH4(+). It carries out the reaction acetamide + H2O = acetate + NH4(+). Allows acetamide to be used as a sole carbon or nitrogen source. This chain is Acetamidase (amdA), found in Mycolicibacterium smegmatis (Mycobacterium smegmatis).